A 384-amino-acid chain; its full sequence is S-adenosylmethionine synthase (384 aa).

H15 is a binding site for ATP. Residue D17 coordinates Mg(2+). E43 contributes to the K(+) binding site. Residues E56 and Q99 each contribute to the L-methionine site. Positions 99-109 (QSADINQGVDR) are flexible loop. ATP is bound by residues 164–166 (DAK), 230–231 (RF), D239, 245–246 (RK), A262, and K266. D239 serves as a coordination point for L-methionine. K270 is a binding site for L-methionine.

This sequence belongs to the AdoMet synthase family. In terms of assembly, homotetramer; dimer of dimers. The cofactor is Mg(2+). Requires K(+) as cofactor.

Its subcellular location is the cytoplasm. The enzyme catalyses L-methionine + ATP + H2O = S-adenosyl-L-methionine + phosphate + diphosphate. It participates in amino-acid biosynthesis; S-adenosyl-L-methionine biosynthesis; S-adenosyl-L-methionine from L-methionine: step 1/1. Its function is as follows. Catalyzes the formation of S-adenosylmethionine (AdoMet) from methionine and ATP. The overall synthetic reaction is composed of two sequential steps, AdoMet formation and the subsequent tripolyphosphate hydrolysis which occurs prior to release of AdoMet from the enzyme. This Haemophilus influenzae (strain 86-028NP) protein is S-adenosylmethionine synthase.